Reading from the N-terminus, the 181-residue chain is MAKFLDAVAGFGVTFASMFKKHVTEEYPEKPGPVAPRYHGRHQLNRYPDGLEKCIGCELCAWACPADAIYVEGADNTEELRYSPGERYGRVYQINYLRCIGCGLCVEACPTRALTMTNDYEMADDNRADLIYEKDRLLAPLLPEMTAPPHPRAPGATDKDYYLGNVTAHGLREAQRAGEPR.

4Fe-4S ferredoxin-type domains follow at residues 44–74 and 90–119; these read LNRY…VEGA and RVYQ…MTND. The [4Fe-4S] cluster site is built by Cys-54, Cys-57, Cys-60, Cys-64, Cys-99, Cys-102, Cys-105, and Cys-109.

Belongs to the complex I 23 kDa subunit family. As to quaternary structure, NDH-1 is composed of 14 different subunits. Subunits NuoA, H, J, K, L, M, N constitute the membrane sector of the complex. The cofactor is [4Fe-4S] cluster.

Its subcellular location is the cell membrane. The enzyme catalyses a quinone + NADH + 5 H(+)(in) = a quinol + NAD(+) + 4 H(+)(out). Its function is as follows. NDH-1 shuttles electrons from NADH, via FMN and iron-sulfur (Fe-S) centers, to quinones in the respiratory chain. The immediate electron acceptor for the enzyme in this species is believed to be menaquinone. Couples the redox reaction to proton translocation (for every two electrons transferred, four hydrogen ions are translocated across the cytoplasmic membrane), and thus conserves the redox energy in a proton gradient. This Mycolicibacterium paratuberculosis (strain ATCC BAA-968 / K-10) (Mycobacterium paratuberculosis) protein is NADH-quinone oxidoreductase subunit I 2.